Here is a 64-residue protein sequence, read N- to C-terminus: Alpha-toxin Ts5 (64 aa).

Positions 2 to 64 (KDGYPVEGDN…KEPTKTSGRC (63 aa)) constitute an LCN-type CS-alpha/beta domain. 4 cysteine pairs are disulfide-bonded: cysteine 12/cysteine 64, cysteine 16/cysteine 38, cysteine 24/cysteine 44, and cysteine 28/cysteine 46.

This sequence belongs to the long (4 C-C) scorpion toxin superfamily. Sodium channel inhibitor family. Alpha subfamily. In terms of tissue distribution, expressed by the venom gland.

The protein localises to the secreted. In terms of biological role, alpha toxins bind voltage-independently at site-3 of sodium channels (Nav) and inhibit the inactivation of the activated channels, thereby blocking neuronal transmission. By extending the depolarized period it indirectly affects beta-cell voltage-dependent potassium channels, thus increasing potassium permeability. The protein is Alpha-toxin Ts5 of Tityus serrulatus (Brazilian scorpion).